A 71-amino-acid polypeptide reads, in one-letter code: MWYSFYTKLHRPVLLRHSLPPVVFGLLLRIDLPLRNRIFRRLKLFFLVFRRLFSWFLVLLPSPRFFSPITL.

A helical membrane pass occupies residues 44 to 66; it reads LFFLVFRRLFSWFLVLLPSPRFF.

The protein localises to the membrane. This is an uncharacterized protein from Saccharomyces cerevisiae (strain ATCC 204508 / S288c) (Baker's yeast).